We begin with the raw amino-acid sequence, 192 residues long: Crossover junction endodeoxyribonuclease RuvC (192 aa).

Catalysis depends on residues D8, E67, and D139. Mg(2+) is bound by residues D8, E67, and D139.

It belongs to the RuvC family. As to quaternary structure, homodimer which binds Holliday junction (HJ) DNA. The HJ becomes 2-fold symmetrical on binding to RuvC with unstacked arms; it has a different conformation from HJ DNA in complex with RuvA. In the full resolvosome a probable DNA-RuvA(4)-RuvB(12)-RuvC(2) complex forms which resolves the HJ. It depends on Mg(2+) as a cofactor.

Its subcellular location is the cytoplasm. It carries out the reaction Endonucleolytic cleavage at a junction such as a reciprocal single-stranded crossover between two homologous DNA duplexes (Holliday junction).. The RuvA-RuvB-RuvC complex processes Holliday junction (HJ) DNA during genetic recombination and DNA repair. Endonuclease that resolves HJ intermediates. Cleaves cruciform DNA by making single-stranded nicks across the HJ at symmetrical positions within the homologous arms, yielding a 5'-phosphate and a 3'-hydroxyl group; requires a central core of homology in the junction. The consensus cleavage sequence is 5'-(A/T)TT(C/G)-3'. Cleavage occurs on the 3'-side of the TT dinucleotide at the point of strand exchange. HJ branch migration catalyzed by RuvA-RuvB allows RuvC to scan DNA until it finds its consensus sequence, where it cleaves and resolves the cruciform DNA. In Haemophilus ducreyi (strain 35000HP / ATCC 700724), this protein is Crossover junction endodeoxyribonuclease RuvC.